The sequence spans 170 residues: MISEVDMDDNFLGLRARDEFYSGKHIHRASQLILLDPENRILLQKRSPGKFWFPNRYTYSVSGTVADESYEACIAREMLEEIGISVPFRRLFKIPCIRENKGAYHTIFSGRCSEEAASLIRHDLEEATSIEWVELEELHRAVKAEPGNYTPALREGIIKIFKEGCEKYLF.

Positions 25-155 constitute a Nudix hydrolase domain; it reads HIHRASQLIL…PGNYTPALRE (131 aa). The Nudix box signature appears at 59-83; the sequence is YSVSGTVADESYEACIAREMLEEIG. 2 residues coordinate Mg(2+): glutamate 77 and glutamate 81.

This sequence belongs to the Nudix hydrolase family. Mg(2+) serves as cofactor.

The catalysed reaction is dimethylallyl diphosphate + H2O = dimethylallyl phosphate + phosphate + H(+). The enzyme catalyses isopentenyl diphosphate + H2O = isopentenyl phosphate + phosphate + H(+). It carries out the reaction (2E,6E)-farnesyl diphosphate + H2O = (2E,6E)-farnesyl phosphate + phosphate + H(+). It catalyses the reaction (2E)-geranyl diphosphate + H2O = (2E)-geranyl phosphate + phosphate + H(+). Its pathway is isoprenoid biosynthesis. Its function is as follows. Hydrolyzes homoallylic isopentenyl diphosphate (IPP), its allylic isomer dimethylallyl diphosphate (DMAPP) and short-chain prenyl diphosphates geranyl diphosphate (GPP) and farnesyl diphosphate (FPP) to their corresponding monophosphate forms with high activity. The preferred substrate is IPP. ADP, NADPH, Ap5A and thiamine diphosphate (TPP) are weakly hydrolyzed. No hydrolysis with ATP, dNTPs, 8-OH-dGTP, NAD+, FAD or acetyl-CoA. The likely physiological role of this enzyme is to provide a substrate dimethylallyl phosphate (DMAP) for prenylated flavin mononucleotide (prenyl-FMN) synthase MM_1871 involved in the biosynthesis of prenyl-FMN, a coenzyme required in the archaea-specific mevalonate pathway. This chain is Prenyl-diphosphate phosphatase, found in Methanosarcina mazei (strain ATCC BAA-159 / DSM 3647 / Goe1 / Go1 / JCM 11833 / OCM 88) (Methanosarcina frisia).